A 150-amino-acid chain; its full sequence is Ribonuclease K6 (150 aa).

Residues 1-23 (MVLCFPLLLLLLVLWGPVCPLHA) form the signal peptide. The active-site Proton acceptor is the H38. 4 disulfides stabilise this stretch: C46-C104, C60-C114, C78-C129, and C85-C92. Residues 61–65 (KHQNT) and K86 each bind substrate. N-linked (GlcNAc...) asparagine glycosylation is present at N100. Substrate is bound at residue R105. The active-site Proton donor is H145.

It belongs to the pancreatic ribonuclease family. Interacts (via N-terminus) with bacterial lipopolysaccharide (LPS).

Its subcellular location is the secreted. The protein localises to the lysosome. The protein resides in the cytoplasmic granule. Functionally, ribonuclease which shows a preference for the pyrimidines uridine and cytosine. Has potent antibacterial activity against a range of Gram-positive and Gram-negative bacteria, including P.aeruginosa, A.baumanii, M.luteus, S.aureus, E.faecalis, E.faecium, S.saprophyticus and E.coli. Causes loss of bacterial membrane integrity, and also promotes agglutination of Gram-negative bacteria. Probably contributes to urinary tract sterility. Bactericidal activity is independent of RNase activity. This is Ribonuclease K6 (RNASE6) from Pan troglodytes (Chimpanzee).